Here is a 300-residue protein sequence, read N- to C-terminus: UDP-3-O-acyl-N-acetylglucosamine deacetylase (300 aa).

Residues histidine 78, histidine 237, and aspartate 241 each contribute to the Zn(2+) site. The active-site Proton donor is histidine 264.

Belongs to the LpxC family. Requires Zn(2+) as cofactor.

The catalysed reaction is a UDP-3-O-[(3R)-3-hydroxyacyl]-N-acetyl-alpha-D-glucosamine + H2O = a UDP-3-O-[(3R)-3-hydroxyacyl]-alpha-D-glucosamine + acetate. It participates in glycolipid biosynthesis; lipid IV(A) biosynthesis; lipid IV(A) from (3R)-3-hydroxytetradecanoyl-[acyl-carrier-protein] and UDP-N-acetyl-alpha-D-glucosamine: step 2/6. Catalyzes the hydrolysis of UDP-3-O-myristoyl-N-acetylglucosamine to form UDP-3-O-myristoylglucosamine and acetate, the committed step in lipid A biosynthesis. The polypeptide is UDP-3-O-acyl-N-acetylglucosamine deacetylase (Acinetobacter baumannii (strain AB307-0294)).